The chain runs to 324 residues: Endochitinase 1 (324 aa).

The N-terminal stretch at 1 to 22 (MSFLQALSIFLLLLLYVVVGSA) is a signal peptide. The region spanning 23–64 (EQCGRQAGGALCPGGLCCSQFGWCGSTADYCTVPGCQSQCSG) is the Chitin-binding type-1 domain. Intrachain disulfides connect C25–C40, C34–C46, C39–C53, C58–C62, C95–C158, C170–C178, and C277–C309. The Proton donor role is filled by E139. Positions 318-324 (GVSVDSM) are cleaved as a propeptide — removed in mature form.

It belongs to the glycosyl hydrolase 19 family. Chitinase class I subfamily.

It carries out the reaction Random endo-hydrolysis of N-acetyl-beta-D-glucosaminide (1-&gt;4)-beta-linkages in chitin and chitodextrins.. Functionally, defense against chitin-containing fungal pathogens. This is Endochitinase 1 from Gossypium hirsutum (Upland cotton).